The following is a 266-amino-acid chain: DNA repair protein RecO (266 aa).

The protein belongs to the RecO family.

Involved in DNA repair and RecF pathway recombination. This chain is DNA repair protein RecO, found in Synechococcus elongatus (strain ATCC 33912 / PCC 7942 / FACHB-805) (Anacystis nidulans R2).